The following is a 104-amino-acid chain: Iron-sulfur cluster assembly protein CyaY (104 aa).

This sequence belongs to the frataxin family.

In terms of biological role, involved in iron-sulfur (Fe-S) cluster assembly. May act as a regulator of Fe-S biogenesis. The protein is Iron-sulfur cluster assembly protein CyaY of Vibrio atlanticus (strain LGP32) (Vibrio splendidus (strain Mel32)).